Consider the following 579-residue polypeptide: Aspartate--tRNA(Asp/Asn) ligase (579 aa).

E169 provides a ligand contact to L-aspartate. Residues 193–196 are aspartate; sequence QLFK. L-aspartate is bound at residue R215. Residues 215–217 and Q224 contribute to the ATP site; that span reads RDE. Residue H437 participates in L-aspartate binding. E471 is a binding site for ATP. Residue R478 participates in L-aspartate binding. Position 523 to 526 (523 to 526) interacts with ATP; sequence GWDR. The interval 551 to 579 is disordered; that stretch reads DPLTGAPTPITAEQRREAGVDAVPEQATS.

This sequence belongs to the class-II aminoacyl-tRNA synthetase family. Type 1 subfamily. As to quaternary structure, homodimer.

It is found in the cytoplasm. It carries out the reaction tRNA(Asx) + L-aspartate + ATP = L-aspartyl-tRNA(Asx) + AMP + diphosphate. In terms of biological role, aspartyl-tRNA synthetase with relaxed tRNA specificity since it is able to aspartylate not only its cognate tRNA(Asp) but also tRNA(Asn). Reaction proceeds in two steps: L-aspartate is first activated by ATP to form Asp-AMP and then transferred to the acceptor end of tRNA(Asp/Asn). In Thermobifida fusca (strain YX), this protein is Aspartate--tRNA(Asp/Asn) ligase.